The primary structure comprises 997 residues: MGVAGCGRPREARALLLLLLLLPPLLAAAVPPDRGLTNGPSEDVDECAQGLDDCHADALCQNTPTSYKCSCKPGYQGEGRQCEDMDECDNTLNGGCVHDCLNIPGNYRCTCFDGFMLAHDGHNCLDMDECLENNGGCQHICTNVIGSYECRCKEGFFLSDNQHTCIHRSEEGLSCMNKDHGCGHICKEAPRGSVACECRPGFELAKNQKDCILTCNHGNGGCQHSCEDTAEGPECSCHPRYRLHADGRSCLEQEGTVLEGTESNATSVADGDKRVKRRLLMETCAVNNGGCDRTCKDTSTGVHCSCPTGFTLQVDGKTCKDIDECQTRNGGCNHFCKNTVGSFDCSCKKGFKLLTDEKSCQDVDECSLERTCDHSCINHPGTFICACNPGYTLYSFTHCGDTNECSVNNGGCQQVCINTVGSYECQCHPGFKLHWNKKDCVEVKGFPPTSMTPRVSLHCGKSGGGDRCFLRCRSGIHLSSDVVTVRTSVTFKLNEGKCSLQKAKLSPEGLRPALPERHSSVKESFQYANLTCSPGKQVPGALGRLNAPKEMFITVEFERETYEKEVTASCNLSCVVKRTEKRLRKALRTLKRAAHREQFHLQLSGMDLDMAKTPSRVSGQHEETCGVGQGHEESQCVSCRAGTYYDGSQERCILCPNGTFQNEEGQVTCEPCPRPENLGSLKISEAWNVSDCGGLCQPGEYSANGFAPCQLCALGTFQPDVGRTSCLSCGGGLPTKHLGATSFQDCETRVQCSPGHFYNTTTHRCIRCPLGTYQPEFGKNNCVSCPGNTTTDFDGSTNITQCKNRKCGGELGDFTGYIESPNYPGNYPANSECTWTINPPPKRRILIVVPEIFLPIEDDCGDYLVMRKTSSSNSVTTYETCQTYERPIAFTSRSKKLWIQFKSNEGNSARGFQVPYVTYDEDYQELIEDIVRDGRLYASENHQEILKDKKLIKALFDVLAHPQNYFKYTAQESREMFPRSFIRLLRSKVSRFLRPYK.

The first 28 residues, M1 to A28, serve as a signal peptide directing secretion. Positions D43–E83 constitute an EGF-like 1; calcium-binding domain. Cystine bridges form between C47–C60, C54–C69, C71–C82, C88–C100, C96–C109, C111–C124, C130–C141, and C137–C150. In terms of domain architecture, EGF-like 2; calcium-binding spans D84–L125. Residues D126–Q162 form the EGF-like 3; calcium-binding domain. 3 consecutive EGF-like domains span residues C175–C211, C215–C250, and C284–C319. The region spanning D321 to Q361 is the EGF-like 7; calcium-binding domain. Intrachain disulfides connect C325-C336, C332-C345, C347-C360, C366-C376, C372-C385, C387-C399, C405-C416, C412-C425, and C427-C440. The EGF-like 8; calcium-binding domain maps to D362–G400. Residues D401–V441 enclose the EGF-like 9; calcium-binding domain. N657 is a glycosylation site (N-linked (GlcNAc...) asparagine). C807 and C833 are disulfide-bonded. The CUB domain maps to C807 to Y919. The segment at I845–L854 is interaction with the cholesterol-anchor of SHH. C860 and C881 are joined by a disulfide.

In terms of assembly, interacts with SHH via the cholesterol anchor of the dually lipid-modified SHH (ShhNp). Interacts with PTCH1. Forms homooligomers and heterooligomers with SCUBE1 and SCUBE3. Interacts with VEGFR2. N-glycosylated. Expressed in adult heart, lung and testis.

It localises to the secreted. Its subcellular location is the cell surface. Lipid-binding protein required for SHH long-range signaling by binding to the dually lipid-modified SHH (ShhNp) and by promoting ShhNp mobilization, solubilization and release from the cell membrane. Acts by enhancing the proteolytic processing (shedding) of the lipid-modified N- and C- terminal of ShhNp at the cell surface. Synergizes with DISP1 to cause an increase in SHH secretion. Probable cell surface coreceptor for VEGFR2 involved in VEGFR2-mediated angiogenesis. The polypeptide is Signal peptide, CUB and EGF-like domain-containing protein 2 (Mus musculus (Mouse)).